Here is a 395-residue protein sequence, read N- to C-terminus: RNA demethylase ALKBH5 (395 aa).

Disordered regions lie at residues 1 to 28 (MAAA…AGSR) and 47 to 83 (AAEP…EEEA). Position 2 is an N-acetylalanine (A2). K58 participates in a covalent cross-link: Glycyl lysine isopeptide (Lys-Gly) (interchain with G-Cter in ubiquitin). Basic and acidic residues predominate over residues 60–83 (KYQEDSDPERSDYEEHQLQKEEEA). Residues S65 and S70 each carry the phosphoserine modification. Residues 68–117 (ERSDYEEHQLQKEEEARKVKSGIRQIRLFSQDECSKIEARIDEVVSRAEK) adopt a coiled-coil conformation. Position 72 is a phosphotyrosine (Y72). A Glycyl lysine isopeptide (Lys-Gly) (interchain with G-Cter in SUMO1) cross-link involves residue K87. S88 carries the post-translational modification Phosphoserine. K133 carries the N6-acetyllysine modification. Residue Y140 is part of the active site. 3 residues coordinate 2-oxoglutarate: N194, Y196, and H205. A disulfide bridge connects residues C231 and C268. Residue K236 is modified to N6-acetyllysine. Residues H267 and R278 each coordinate 2-oxoglutarate. A disordered region spans residues 294 to 395 (ETKSLSSSTL…PTRKVKMRRH (102 aa)). Over residues 296–306 (KSLSSSTLPPS) the composition is skewed to low complexity. K322 is covalently cross-linked (Glycyl lysine isopeptide (Lys-Gly) (interchain with G-Cter in SUMO1)). S326 is subject to Phosphoserine. Residue K329 forms a Glycyl lysine isopeptide (Lys-Gly) (interchain with G-Cter in SUMO2) linkage. Over residues 329 to 350 (KADPDAAHRPRILEMDKEENRR) the composition is skewed to basic and acidic residues. Omega-N-methylarginine is present on R360. S362, S372, S375, and S385 each carry phosphoserine.

It belongs to the alkB family. In terms of assembly, monomer. Interacts with RBM33; promoting desumoylation by SENP1 and recruitment to N(6)-methyladenosine-containing mRNAs. Interacts (when acetylated by KAT8) with PSPC1; interaction facilitates recognition of N(6)-methyladenosine (m6A) mRNA. Fe(2+) is required as a cofactor. In terms of processing, phosphorylated at Ser-88 and Ser-326 in response to reactive oxygen species (ROS), promoting sumoylation and inactivation. Post-translationally, acetylated by KAT8 at Lys-236, promoting interaction with PSPC1, thereby facilitating recognition of N(6)-methyladenosine (m6A) mRNA by ALKBH5. Deacetylated at Lys-236 by HDAC7. Sumoylated at Lys-87 and Lys-322 by PIAS4 following phosphorylation at Ser-88 and Ser-326 in response to reactive oxygen species (ROS), inhibiting the RNA demethylase activity. Desumoylated by SENP1; relieving RNA demethylase inhibition, leading to N(6)-methyladenosine-containing mRNAs demethylation. In terms of processing, ubiquitinated at Lys-58 via 'Lys-48'-linked polyubiquitin chain, leading to its degradation by the proteasome. Deubiquitinated at Lys-58 by USP9X, promoting its stabilizazion.

Its subcellular location is the nucleus speckle. It carries out the reaction an N(6)-methyladenosine in mRNA + 2-oxoglutarate + O2 = an adenosine in mRNA + formaldehyde + succinate + CO2. With respect to regulation, RNA demethylase activity is inhibited following sumoylation. Inhibition is relieved following desumoylation. Functionally, dioxygenase that specifically demethylates N(6)-methyladenosine (m6A) RNA, the most prevalent internal modification of messenger RNA (mRNA) in higher eukaryotes. Demethylates RNA by oxidative demethylation, which requires molecular oxygen, alpha-ketoglutarate and iron. Demethylation of m6A mRNA affects mRNA processing, translation and export. Can also demethylate N(6)-methyladenosine in single-stranded DNA (in vitro). Required for the late meiotic and haploid phases of spermatogenesis by mediating m6A demethylation in spermatocytes and round spermatids: m6A demethylation of target transcripts is required for correct splicing and the production of longer 3'-UTR mRNAs in male germ cells. Involved in paraspeckle assembly, a nuclear membraneless organelle, by undergoing liquid-liquid phase separation. Paraspeckle assembly is coupled with m6A demethylation of RNAs, such as NEAT1 non-coding RNA. Also acts as a negative regulator of T-cell development: inhibits gamma-delta T-cell proliferation via demethylation of JAG1 and NOTCH2 transcripts. Inhibits regulatory T-cell (Treg) recruitment by mediating demethylation and destabilization of CCL28 mRNAs. The chain is RNA demethylase ALKBH5 (Alkbh5) from Rattus norvegicus (Rat).